A 73-amino-acid polypeptide reads, in one-letter code: Large ribosomal subunit protein bL31 (73 aa).

Zn(2+) contacts are provided by C16, C18, C37, and C40.

Belongs to the bacterial ribosomal protein bL31 family. Type A subfamily. Part of the 50S ribosomal subunit. Zn(2+) is required as a cofactor.

In terms of biological role, binds the 23S rRNA. The polypeptide is Large ribosomal subunit protein bL31 (Pseudomonas savastanoi pv. phaseolicola (strain 1448A / Race 6) (Pseudomonas syringae pv. phaseolicola (strain 1448A / Race 6))).